A 242-amino-acid polypeptide reads, in one-letter code: Eukaryotic translation initiation factor 4E type 1B (242 aa).

The disordered stretch occupies residues 1–42; that stretch reads MLAVEVSEAEGGIREWEEEEKEEEAAERTPTGEKSPNSPRTL. Positions 16 to 25 are enriched in acidic residues; that stretch reads WEEEEKEEEA. Polar residues predominate over residues 32-41; sequence GEKSPNSPRT. The segment at 62-65 is EIF4EBP1/2/3 binding; the sequence is HPLQ. An mRNA-binding site is contributed by 81 to 82; sequence WQ. Residues 98–102 are EIF4EBP1/2/3 binding; it reads WALYS. 127–128 contacts mRNA; sequence WE. Residues 157–164 are EIF4EBP1/2/3 binding; the sequence is ETLLCLIG. MRNA-binding positions include 182-187 and 230-232; these read RTKGDK and TKS.

This sequence belongs to the eukaryotic initiation factor 4E family. As to quaternary structure, eIF4F is a multi-subunit complex, the composition of which varies with external and internal environmental conditions. It is composed of at least EIF4A, EIF4E and EIF4G.

Its function is as follows. Recognizes and binds the 7-methylguanosine-containing mRNA cap during an early step in the initiation of protein synthesis and facilitates ribosome binding by inducing the unwinding of the mRNAs secondary structure. The protein is Eukaryotic translation initiation factor 4E type 1B (EIF4E1B) of Homo sapiens (Human).